We begin with the raw amino-acid sequence, 802 residues long: Leucine--tRNA ligase (802 aa).

The 'HIGH' region motif lies at 40 to 51 (PYPSGAGLHVGH). Positions 576–580 (KMSKS) match the 'KMSKS' region motif. Lys-579 lines the ATP pocket.

This sequence belongs to the class-I aminoacyl-tRNA synthetase family.

The protein resides in the cytoplasm. The enzyme catalyses tRNA(Leu) + L-leucine + ATP = L-leucyl-tRNA(Leu) + AMP + diphosphate. The sequence is that of Leucine--tRNA ligase from Bacillus cytotoxicus (strain DSM 22905 / CIP 110041 / 391-98 / NVH 391-98).